Reading from the N-terminus, the 186-residue chain is dCTP deaminase (186 aa).

107 to 112 (KSSYAR) provides a ligand contact to dCTP. The Proton donor/acceptor role is filled by E133. DCTP contacts are provided by Q152, Y166, and Q176.

This sequence belongs to the dCTP deaminase family. Homotrimer.

It catalyses the reaction dCTP + H2O + H(+) = dUTP + NH4(+). It functions in the pathway pyrimidine metabolism; dUMP biosynthesis; dUMP from dCTP (dUTP route): step 1/2. Its function is as follows. Catalyzes the deamination of dCTP to dUTP. The sequence is that of dCTP deaminase from Chloroflexus aggregans (strain MD-66 / DSM 9485).